A 353-amino-acid polypeptide reads, in one-letter code: tRNA-specific 2-thiouridylase MnmA 2 (353 aa).

6–13 (LLSGGVDS) is a binding site for ATP. Residues 92–94 (NPD) are interaction with target base in tRNA. The active-site Nucleophile is Cys97. Residues Cys97 and Cys192 are joined by a disulfide bond. Gly120 contacts ATP. The interval 142 to 144 (KDQ) is interaction with tRNA. The active-site Cysteine persulfide intermediate is the Cys192.

The protein belongs to the MnmA/TRMU family.

Its subcellular location is the cytoplasm. It catalyses the reaction S-sulfanyl-L-cysteinyl-[protein] + uridine(34) in tRNA + AH2 + ATP = 2-thiouridine(34) in tRNA + L-cysteinyl-[protein] + A + AMP + diphosphate + H(+). Its function is as follows. Catalyzes the 2-thiolation of uridine at the wobble position (U34) of tRNA, leading to the formation of s(2)U34. This is tRNA-specific 2-thiouridylase MnmA 2 from Bacteroides fragilis (strain ATCC 25285 / DSM 2151 / CCUG 4856 / JCM 11019 / LMG 10263 / NCTC 9343 / Onslow / VPI 2553 / EN-2).